The chain runs to 711 residues: Ribosomal RNA large subunit methyltransferase K/L (711 aa).

One can recognise a THUMP domain in the interval aspartate 42–leucine 153.

Belongs to the methyltransferase superfamily. RlmKL family.

It is found in the cytoplasm. It carries out the reaction guanosine(2445) in 23S rRNA + S-adenosyl-L-methionine = N(2)-methylguanosine(2445) in 23S rRNA + S-adenosyl-L-homocysteine + H(+). The catalysed reaction is guanosine(2069) in 23S rRNA + S-adenosyl-L-methionine = N(2)-methylguanosine(2069) in 23S rRNA + S-adenosyl-L-homocysteine + H(+). In terms of biological role, specifically methylates the guanine in position 2445 (m2G2445) and the guanine in position 2069 (m7G2069) of 23S rRNA. This Xanthomonas oryzae pv. oryzae (strain MAFF 311018) protein is Ribosomal RNA large subunit methyltransferase K/L.